The chain runs to 855 residues: Valine--tRNA ligase (855 aa).

Residues 44–54 (PNVTGVLHIGH) carry the 'HIGH' region motif. The 'KMSKS' region signature appears at 524–528 (KMSKT). Lys-527 is a binding site for ATP. The stretch at 797–827 (KVEEDPARKQKEREQLEKNIANSKRQLGDEV) forms a coiled coil.

Belongs to the class-I aminoacyl-tRNA synthetase family. ValS type 1 subfamily. As to quaternary structure, monomer.

Its subcellular location is the cytoplasm. The catalysed reaction is tRNA(Val) + L-valine + ATP = L-valyl-tRNA(Val) + AMP + diphosphate. Functionally, catalyzes the attachment of valine to tRNA(Val). As ValRS can inadvertently accommodate and process structurally similar amino acids such as threonine, to avoid such errors, it has a 'posttransfer' editing activity that hydrolyzes mischarged Thr-tRNA(Val) in a tRNA-dependent manner. The protein is Valine--tRNA ligase of Solibacter usitatus (strain Ellin6076).